The primary structure comprises 117 residues: Protein YchN (117 aa).

It to M.jannaschii MJ0989. In terms of assembly, homohexamer. The hexamer is formed by a dimer of trimers.

The polypeptide is Protein YchN (ychN) (Escherichia coli O157:H7).